The primary structure comprises 424 residues: Phosphoprotein associated with glycosphingolipid-enriched microdomains 1 (424 aa).

Residues 1-17 (MGPAGSALSSGQMQMQM) are Extracellular-facing. A helical; Signal-anchor for type III membrane protein transmembrane segment spans residues 18-38 (VLWGSLAAVAMFFLITFLILL). Residues Cys-39 and Cys-42 are each lipidated (S-palmitoyl cysteine). At 39-424 (CSSCDRDKKP…LQQGRDVTRL (386 aa)) the chain is on the cytoplasmic side. Residues Ser-52 and Ser-63 each carry the phosphoserine modification. Position 107 is a phosphotyrosine; by LYN (Tyr-107). Ser-157 carries the post-translational modification Phosphoserine. A phosphotyrosine mark is found at Tyr-165, Tyr-183, and Tyr-224. A disordered region spans residues 194–347 (DKSQGGKSKS…GPPQRSSSSC (154 aa)). Over residues 215 to 230 (AEGKADFAEYASVDRN) the composition is skewed to basic and acidic residues. The residue at position 226 (Ser-226) is a Phosphoserine. Residues 236–247 (STNAESILGTSS) show a composition bias toward polar residues. Tyr-314 carries the post-translational modification Phosphotyrosine; by FYN and LYN. The tract at residues 314–317 (YSSV) is interaction with CSK. Positions 331-347 (STCQCPQGPPQRSSSSC) are enriched in polar residues. Position 346 is a phosphoserine (Ser-346). A phosphotyrosine mark is found at Tyr-351, Tyr-381, and Tyr-409. The tract at residues 361-424 (PNSISMLPPA…LQQGRDVTRL (64 aa)) is disordered. The interval 422 to 424 (TRL) is interaction with NHERF1.

Interacts with NHERF1/EBP50. In resting T-cells, part of a PAG1-NHERF1-MSN complex which is disrupted upon TCR activation. When phosphorylated, interacts with CSK. Identified in a complex with LYN and STAT3. Interacts with LYN. Post-translationally, palmitoylated. Phosphorylated by FYN on Tyr-314 in resting T-cells; which promotes interaction with CSK. Dephosphorylated by PTPRC/CD45 upon TCR activation; which leads to CSK dissociation. May also be dephosphorylated by PTPN11. Hyperphosphorylated in mast cells upon FCER1 activation. Phosphorylated by LYN in response to EPO. As to expression, ubiquitously expressed, with highest levels in developing brain, lung, thymus, spleen and testis. Present in mast cells.

Its subcellular location is the cell membrane. In terms of biological role, negatively regulates TCR (T-cell antigen receptor)-mediated signaling in T-cells and FCER1 (high affinity immunoglobulin epsilon receptor)-mediated signaling in mast cells. Promotes CSK activation and recruitment to lipid rafts, which results in LCK inhibition. Inhibits immunological synapse formation by preventing dynamic arrangement of lipid raft proteins. May be involved in cell adhesion signaling. This Rattus norvegicus (Rat) protein is Phosphoprotein associated with glycosphingolipid-enriched microdomains 1 (Pag1).